We begin with the raw amino-acid sequence, 344 residues long: MDSTVVLITGCSSGIGLHLAVRLASDRSQSFKVYATLRDLKSQGPLLEAARAQGCPPGSLEILELDVRDSESVAAARACVTEGRVDVLVCNAGRGLFGPLEAHELNAVGAVLDVNVLGTIRMLQAFLPDMKRRHSGRVLVTASVGGLMGLPFHEVYCASKFALEGLCESLAILLPLFGVHVSLIECGAVHTAFHEKLEGGPGGALERADAQTRHLFAHYQRGYEQALSEAQDPEEVTELFLTAMRAPQPALRYFSTNRFLPLARMRTEDPSGSSYVEAMHREAFSDLQVQEGAKAGAQVSGDPDTPPRALICLPECAIPRVTAELGWSASDKPGQNKSCYQQKI.

3–32 provides a ligand contact to NAD(+); that stretch reads STVVLITGCSSGIGLHLAVRLASDRSQSFK. Residue S143 coordinates substrate. The active-site Proton acceptor is Y156.

Belongs to the short-chain dehydrogenases/reductases (SDR) family. As to quaternary structure, homodimer.

The protein localises to the cytoplasm. It catalyses the reaction 17beta-estradiol + NAD(+) = estrone + NADH + H(+). The enzyme catalyses 17beta-estradiol + NADP(+) = estrone + NADPH + H(+). The protein operates within steroid biosynthesis; estrogen biosynthesis. Favors the reduction of estrogens and androgens. Uses preferentially NADH. This Rattus norvegicus (Rat) protein is Estradiol 17-beta-dehydrogenase 1 (Hsd17b1).